The sequence spans 526 residues: MSDFYQDFNKRRTFAIISHPDAGKTTVTEKLLLFGGAIQLAGTVKGRKADRHATSDWMEMEKERGISITTSVMQFVHNQHVINLLDTPGHEDFSEDTYRTLTAVDSALMVIDVAKGVEERTVKLMEVCRLRDTPIMTFINKLDREGREPIDLLDEVESVLGIQCAPITWPVGMGKRFKGIYHRYQDIIYLYQQGSNAKKIDATQIKGLDNPQLDELIGDSAKELREEIELVRGASNEFNLQDYLAGKMTPVYFGSAINNFGIKELLDDFVEYAPGPQPRATQERVVSPNEETFSGFVFKIQANMDPKHRDRIAFVRVCSGSYKKGMKLSHLRIGKEVQISNALTFMAGDRSHTELALAGDIIGLHNHGTIRIGDTFTQGEQLKFTGIPNFAPELFRLVRLRDPLKSKALLKGLIELSEEGATQVFRPLNSNQLILGAVGILQFDVVAHRLKYEYKVDCIYESVNIACARWVYSDDDKAMSEFRTKAYDYLALDGGDMLMYLAPTKVNLTMAEERYPKIKFCATREH.

Positions 9–277 constitute a tr-type G domain; sequence NKRRTFAIIS…DFVEYAPGPQ (269 aa). Residues 18–25, 86–90, and 140–143 contribute to the GTP site; these read SHPDAGKT, DTPGH, and NKLD.

It belongs to the TRAFAC class translation factor GTPase superfamily. Classic translation factor GTPase family. PrfC subfamily.

It is found in the cytoplasm. Increases the formation of ribosomal termination complexes and stimulates activities of RF-1 and RF-2. It binds guanine nucleotides and has strong preference for UGA stop codons. It may interact directly with the ribosome. The stimulation of RF-1 and RF-2 is significantly reduced by GTP and GDP, but not by GMP. The chain is Peptide chain release factor 3 from Legionella pneumophila (strain Lens).